The following is a 318-amino-acid chain: CMRF35-like molecule 8 (318 aa).

The first 27 residues, M1–P27, serve as a signal peptide directing secretion. Positions L28 to Y129 constitute an Ig-like V-type domain. At L28–P185 the chain is on the extracellular side. C46 and C113 are disulfide-bonded. N-linked (GlcNAc...) asparagine glycosylation occurs at N93. The segment covering S139–P148 has biased composition (low complexity). Residues S139–R174 form a disordered region. A helical transmembrane segment spans residues A186–W206. Residues R207–L318 are Cytoplasmic-facing. Positions Q284–P296 are enriched in polar residues. The tract at residues Q284–L318 is disordered. The segment covering Q297–K308 has biased composition (basic and acidic residues). Y303 is subject to Phosphotyrosine.

It belongs to the CD300 family. As to quaternary structure, upon tyrosine-phosphorylation, interacts with PTN6/SHP-1 and PTPN11/SHP-2 and INPP5D. In terms of processing, phosphorylated on tyrosine. Post-translationally, N-glycosylated. As to expression, present on the surface of the majority of myeloid cells and a subset of B-cells. Present on the surface of NK cells after IL-12 stimulation.

It localises to the cell membrane. Functionally, inhibitory receptor which may contribute to the down-regulation of cytolytic activity in natural killer (NK) cells, and to the down-regulation of mast cell degranulation. Negatively regulates the Toll-like receptor (TLR) signaling mediated by MYD88 but not TRIF through activation of PTPN6. In Mus musculus (Mouse), this protein is CMRF35-like molecule 8 (Cd300a).